The chain runs to 364 residues: Spermidine/putrescine import ATP-binding protein PotA (364 aa).

One can recognise an ABC transporter domain in the interval 5-235 (LSLKSVSKSY…PVNRFVADFI (231 aa)). 37-44 (GPSGCGKT) lines the ATP pocket.

The protein belongs to the ABC transporter superfamily. Spermidine/putrescine importer (TC 3.A.1.11.1) family. As to quaternary structure, the complex is composed of two ATP-binding proteins (PotA), two transmembrane proteins (PotB and PotC) and a solute-binding protein (PotD).

It is found in the cell membrane. The catalysed reaction is ATP + H2O + polyamine-[polyamine-binding protein]Side 1 = ADP + phosphate + polyamineSide 2 + [polyamine-binding protein]Side 1.. Its function is as follows. Part of the ABC transporter complex PotABCD involved in spermidine/putrescine import. Responsible for energy coupling to the transport system. This is Spermidine/putrescine import ATP-binding protein PotA from Staphylococcus aureus (strain USA300).